Consider the following 100-residue polypeptide: Small ribosomal subunit protein uS17 (100 aa).

This sequence belongs to the universal ribosomal protein uS17 family. As to quaternary structure, part of the 30S ribosomal subunit.

In terms of biological role, one of the primary rRNA binding proteins, it binds specifically to the 5'-end of 16S ribosomal RNA. The protein is Small ribosomal subunit protein uS17 of Fervidobacterium nodosum (strain ATCC 35602 / DSM 5306 / Rt17-B1).